Consider the following 500-residue polypeptide: Probable malate:quinone oxidoreductase (500 aa).

The protein belongs to the MQO family. Requires FAD as cofactor.

It catalyses the reaction (S)-malate + a quinone = a quinol + oxaloacetate. The protein operates within carbohydrate metabolism; tricarboxylic acid cycle; oxaloacetate from (S)-malate (quinone route): step 1/1. In Gluconobacter oxydans (strain 621H) (Gluconobacter suboxydans), this protein is Probable malate:quinone oxidoreductase.